A 405-amino-acid polypeptide reads, in one-letter code: GTPase Obg (405 aa).

The 159-residue stretch at 1-159 (MRFIDEAVVT…KVLKFELKVV (159 aa)) folds into the Obg domain. Residues 160 to 333 (ADVGLIGLPN…IKYHLMNEIE (174 aa)) enclose the OBG-type G domain. Residues 166–173 (GLPNAGKS), 191–195 (FTTLV), 213–216 (DIPG), 283–286 (NKID), and 314–316 (ATL) contribute to the GTP site. Ser-173 and Thr-193 together coordinate Mg(2+). The span at 371–382 (YRAARKAAREGT) shows a compositional bias: basic and acidic residues. Residues 371 to 405 (YRAARKAAREGTDLSDDDFDGSDDDDDGVEVIYAP) are disordered. Positions 383 to 399 (DLSDDDFDGSDDDDDGV) are enriched in acidic residues.

The protein belongs to the TRAFAC class OBG-HflX-like GTPase superfamily. OBG GTPase family. As to quaternary structure, monomer. Requires Mg(2+) as cofactor.

It localises to the cytoplasm. An essential GTPase which binds GTP, GDP and possibly (p)ppGpp with moderate affinity, with high nucleotide exchange rates and a fairly low GTP hydrolysis rate. Plays a role in control of the cell cycle, stress response, ribosome biogenesis and in those bacteria that undergo differentiation, in morphogenesis control. The polypeptide is GTPase Obg (Psychrobacter arcticus (strain DSM 17307 / VKM B-2377 / 273-4)).